The following is a 741-amino-acid chain: Transketolase-1, chloroplastic (741 aa).

The transit peptide at 1-66 directs the protein to the chloroplast; the sequence is MASTSSLALS…NRSLRPLVRA (66 aa). The disordered stretch occupies residues 22–51; that stretch reads GSDQRGSLPAFSGLKSTGSRASASSRRRIA. Ala67 is subject to N-acetylalanine. His103 lines the substrate pocket. Residues His143 and 192-194 contribute to the thiamine diphosphate site; that span reads GPL. Asp233 is a Mg(2+) binding site. Thiamine diphosphate is bound by residues Gly234 and Asn263. Mg(2+)-binding residues include Asn263 and Ile265. A substrate-binding site is contributed by His340. A thiamine diphosphate-binding site is contributed by His340. Phosphoserine is present on Ser428. Positions 434 and 461 each coordinate substrate. The thiamine diphosphate site is built by Glu488 and Phe515. Glu488 serves as the catalytic Proton donor. Substrate contacts are provided by His539, Asp547, and Arg598.

The protein belongs to the transketolase family. Homodimer. It depends on Mg(2+) as a cofactor. Ca(2+) is required as a cofactor. The cofactor is Mn(2+). Co(2+) serves as cofactor. Requires thiamine diphosphate as cofactor.

The protein resides in the plastid. It is found in the chloroplast stroma. It carries out the reaction D-sedoheptulose 7-phosphate + D-glyceraldehyde 3-phosphate = aldehydo-D-ribose 5-phosphate + D-xylulose 5-phosphate. The protein operates within carbohydrate biosynthesis; Calvin cycle. Catalyzes the reversible transfer of a two-carbon ketol group from fructose-6-phosphate or sedoheptulose-7-phosphate to glyceraldehyde-3-phosphate to yield xylulose-5-phosphate and erythrose-4-phosphate or ribose-5-phosphate, respectively. Could act as a stress sensor involved in adaptation process. This is Transketolase-1, chloroplastic (TKL-1) from Arabidopsis thaliana (Mouse-ear cress).